The chain runs to 172 residues: DNA-directed RNA polymerase II subunit RPB7 (172 aa).

It belongs to the eukaryotic RPB7/RPC8 RNA polymerase subunit family. In terms of assembly, component of the RNA polymerase II (Pol II) complex consisting of 12 subunits. RPB4 and RPB7 form a subcomplex that protrudes from the 10-subunit Pol II core complex.

Its subcellular location is the nucleus. DNA-dependent RNA polymerase catalyzes the transcription of DNA into RNA using the four ribonucleoside triphosphates as substrates. Component of RNA polymerase II which synthesizes mRNA precursors and many functional non-coding RNAs. Pol II is the central component of the basal RNA polymerase II transcription machinery. It is composed of mobile elements that move relative to each other. RPB7 is part of a subcomplex with RPB4 that binds to a pocket formed by RPB1, RPB2 and RPB6 at the base of the clamp element. The RPB4-RPB7 subcomplex seems to lock the clamp via RPB7 in the closed conformation thus preventing double-stranded DNA to enter the active site cleft. The RPB4-RPB7 subcomplex binds single-stranded DNA and RNA. In Danio rerio (Zebrafish), this protein is DNA-directed RNA polymerase II subunit RPB7 (polr2g).